A 456-amino-acid polypeptide reads, in one-letter code: GTP cyclohydrolase 1 (456 aa).

The Zn(2+) site is built by C340, H343, and C412.

Belongs to the GTP cyclohydrolase I family. As to quaternary structure, homodimer. As to expression, expressed in leaves and unripe fruits.

The enzyme catalyses GTP + H2O = 7,8-dihydroneopterin 3'-triphosphate + formate + H(+). It functions in the pathway cofactor biosynthesis; 7,8-dihydroneopterin triphosphate biosynthesis; 7,8-dihydroneopterin triphosphate from GTP: step 1/1. Its function is as follows. GTP cyclohydrolase 1 is the first enzyme in the biosynthetic pathway leading to folic acid. This Solanum lycopersicum (Tomato) protein is GTP cyclohydrolase 1 (GCH1).